Here is a 291-residue protein sequence, read N- to C-terminus: Small ribosomal subunit biogenesis GTPase RsgA (291 aa).

One can recognise a CP-type G domain in the interval 63 to 221; the sequence is NNELKRPPVS…IADTPGFSAL (159 aa). GTP is bound by residues 112–115 and 164–172; these read TKHD and GQSGVGKST. Positions 245, 250, 252, and 258 each coordinate Zn(2+).

This sequence belongs to the TRAFAC class YlqF/YawG GTPase family. RsgA subfamily. Monomer. Associates with 30S ribosomal subunit, binds 16S rRNA. Zn(2+) is required as a cofactor.

The protein resides in the cytoplasm. Functionally, one of several proteins that assist in the late maturation steps of the functional core of the 30S ribosomal subunit. Helps release RbfA from mature subunits. May play a role in the assembly of ribosomal proteins into the subunit. Circularly permuted GTPase that catalyzes slow GTP hydrolysis, GTPase activity is stimulated by the 30S ribosomal subunit. The protein is Small ribosomal subunit biogenesis GTPase RsgA of Staphylococcus epidermidis (strain ATCC 12228 / FDA PCI 1200).